The chain runs to 171 residues: Crossover junction endodeoxyribonuclease RuvC (171 aa).

Residues aspartate 7, glutamate 66, and aspartate 138 contribute to the active site. The Mg(2+) site is built by aspartate 7, glutamate 66, and aspartate 138.

It belongs to the RuvC family. In terms of assembly, homodimer which binds Holliday junction (HJ) DNA. The HJ becomes 2-fold symmetrical on binding to RuvC with unstacked arms; it has a different conformation from HJ DNA in complex with RuvA. In the full resolvosome a probable DNA-RuvA(4)-RuvB(12)-RuvC(2) complex forms which resolves the HJ. Mg(2+) is required as a cofactor.

The protein localises to the cytoplasm. It catalyses the reaction Endonucleolytic cleavage at a junction such as a reciprocal single-stranded crossover between two homologous DNA duplexes (Holliday junction).. The RuvA-RuvB-RuvC complex processes Holliday junction (HJ) DNA during genetic recombination and DNA repair. Endonuclease that resolves HJ intermediates. Cleaves cruciform DNA by making single-stranded nicks across the HJ at symmetrical positions within the homologous arms, yielding a 5'-phosphate and a 3'-hydroxyl group; requires a central core of homology in the junction. The consensus cleavage sequence is 5'-(A/T)TT(C/G)-3'. Cleavage occurs on the 3'-side of the TT dinucleotide at the point of strand exchange. HJ branch migration catalyzed by RuvA-RuvB allows RuvC to scan DNA until it finds its consensus sequence, where it cleaves and resolves the cruciform DNA. This chain is Crossover junction endodeoxyribonuclease RuvC, found in Francisella tularensis subsp. mediasiatica (strain FSC147).